The primary structure comprises 348 residues: Phosphoribosylformylglycinamidine cyclo-ligase (348 aa).

The protein belongs to the AIR synthase family.

The protein resides in the cytoplasm. The catalysed reaction is 2-formamido-N(1)-(5-O-phospho-beta-D-ribosyl)acetamidine + ATP = 5-amino-1-(5-phospho-beta-D-ribosyl)imidazole + ADP + phosphate + H(+). It participates in purine metabolism; IMP biosynthesis via de novo pathway; 5-amino-1-(5-phospho-D-ribosyl)imidazole from N(2)-formyl-N(1)-(5-phospho-D-ribosyl)glycinamide: step 2/2. This is Phosphoribosylformylglycinamidine cyclo-ligase from Aromatoleum aromaticum (strain DSM 19018 / LMG 30748 / EbN1) (Azoarcus sp. (strain EbN1)).